Consider the following 62-residue polypeptide: Large ribosomal subunit protein bL35 (62 aa).

Positions 1–26 (MPKMKTKSGLKKRIKITATGKVKRGN) are enriched in basic residues. Residues 1-62 (MPKMKTKSGL…SDFKRYKELI (62 aa)) form a disordered region. Over residues 53-62 (SDFKRYKELI) the composition is skewed to basic and acidic residues.

This sequence belongs to the bacterial ribosomal protein bL35 family.

The chain is Large ribosomal subunit protein bL35 from Metamycoplasma arthritidis (strain 158L3-1) (Mycoplasma arthritidis).